Reading from the N-terminus, the 130-residue chain is Small ribosomal subunit protein uS9 (130 aa).

The protein belongs to the universal ribosomal protein uS9 family.

The chain is Small ribosomal subunit protein uS9 from Janthinobacterium sp. (strain Marseille) (Minibacterium massiliensis).